Here is a 235-residue protein sequence, read N- to C-terminus: Small ribosomal subunit protein eS6 (235 aa).

Ser-229 and Ser-230 each carry phosphoserine.

Belongs to the eukaryotic ribosomal protein eS6 family. Post-translationally, phosphorylated.

This is Small ribosomal subunit protein eS6 (RPS6) from Kluyveromyces marxianus (Yeast).